A 117-amino-acid polypeptide reads, in one-letter code: Aspartate 1-decarboxylase (117 aa).

The active-site Schiff-base intermediate with substrate; via pyruvic acid is Ser25. At Ser25 the chain carries Pyruvic acid (Ser). Thr57 contributes to the substrate binding site. Tyr58 (proton donor) is an active-site residue. 72–74 (GAA) contributes to the substrate binding site.

The protein belongs to the PanD family. Heterooctamer of four alpha and four beta subunits. Pyruvate is required as a cofactor. Is synthesized initially as an inactive proenzyme, which is activated by self-cleavage at a specific serine bond to produce a beta-subunit with a hydroxyl group at its C-terminus and an alpha-subunit with a pyruvoyl group at its N-terminus.

It localises to the cytoplasm. It carries out the reaction L-aspartate + H(+) = beta-alanine + CO2. It functions in the pathway cofactor biosynthesis; (R)-pantothenate biosynthesis; beta-alanine from L-aspartate: step 1/1. In terms of biological role, catalyzes the pyruvoyl-dependent decarboxylation of aspartate to produce beta-alanine. The protein is Aspartate 1-decarboxylase of Helicobacter pylori (strain J99 / ATCC 700824) (Campylobacter pylori J99).